The chain runs to 359 residues: Type-1 angiotensin II receptor (359 aa).

At 1–25 the chain is on the extracellular side; sequence MMLNSSTEDGIKRIQDDCPKAGRHN. The N-linked (GlcNAc...) asparagine glycan is linked to asparagine 4. Angiotensin II contacts are provided by glutamine 15 and aspartate 17. Disulfide bonds link cysteine 18–cysteine 274 and cysteine 101–cysteine 180. The chain crosses the membrane as a helical span at residues 26 to 55; sequence YIFVMIPTLYSIIFVVGIFGNSLAVIVIYF. Residues 56–61 lie on the Cytoplasmic side of the membrane; that stretch reads YMKLKT. Residues 62–89 form a helical membrane-spanning segment; sequence VASVFLLNLALADLCFLLTLPLWAVYTA. The Extracellular segment spans residues 90 to 98; that stretch reads MEYRWPFGN. The helical transmembrane segment at 99–125 threads the bilayer; it reads YLCKIASASVSFNLYASVFLLTCLSID. At 126 to 141 the chain is on the cytoplasmic side; that stretch reads RYLAIVHPMKSRLRRT. The chain crosses the membrane as a helical span at residues 142–165; the sequence is MLVAKVTCIIIWLLAGLASLPAII. Topologically, residues 166–190 are extracellular; the sequence is HRNVFFIENTNITVCAFHYESQNST. An angiotensin II-binding site is contributed by arginine 167. Residue asparagine 176 is glycosylated (N-linked (GlcNAc...) asparagine). Residues phenylalanine 182, histidine 183, and tyrosine 184 each coordinate angiotensin II. A glycan (N-linked (GlcNAc...) asparagine) is linked at asparagine 188. A helical membrane pass occupies residues 191–216; that stretch reads LPIGLGLTKNILGFLFPFLIILTSYT. Lysine 199 is an angiotensin II binding site. The Cytoplasmic portion of the chain corresponds to 217 to 239; it reads LIWKALKKAYEIQKNKPRNDDIF. The chain crosses the membrane as a helical span at residues 240–268; that stretch reads KIIMAIVLFFFFSWVPHQIFTFLDVLIQL. Topologically, residues 269 to 278 are extracellular; the sequence is GVIHDCRIAD. The helical transmembrane segment at 279-304 threads the bilayer; that stretch reads IVDTAMPITICIAYFNNCLNPLFYGF. The Cytoplasmic segment spans residues 305 to 359; sequence LGKKFKKYFLQLLKYIPPKAKSHSNLSTKMSTLSYRPSDNVSSSSKKPVPCFEVE. Residues 335–350 are compositionally biased toward polar residues; sequence STLSYRPSDNVSSSSK. The segment at 335–359 is disordered; the sequence is STLSYRPSDNVSSSSKKPVPCFEVE. Residue cysteine 355 is the site of S-palmitoyl cysteine attachment.

The protein belongs to the G-protein coupled receptor 1 family. In terms of assembly, interacts with MAS1. Interacts with ARRB1. Interacts with FLNA (via filamin repeat 21); increases PKA-mediated phosphorylation of FLNA. C-terminal Ser or Thr residues may be phosphorylated.

It is found in the cell membrane. Its function is as follows. Receptor for angiotensin II, a vasoconstricting peptide, which acts as a key regulator of blood pressure and sodium retention by the kidney. The activated receptor in turn couples to G-alpha proteins G(q) (GNAQ, GNA11, GNA14 or GNA15) and thus activates phospholipase C and increases the cytosolic Ca(2+) concentrations, which in turn triggers cellular responses such as stimulation of protein kinase C. The polypeptide is Type-1 angiotensin II receptor (AGTR1) (Oryctolagus cuniculus (Rabbit)).